Here is a 356-residue protein sequence, read N- to C-terminus: GTPase Obg (356 aa).

In terms of domain architecture, Obg spans 1–159 (MKFLDEAKVY…RWIWLRMKLI (159 aa)). The 168-residue stretch at 160–327 (ADAGLVGLPN…ALRKLADVIS (168 aa)) folds into the OBG-type G domain. GTP contacts are provided by residues 166–173 (GLPNAGKS), 191–195 (FTTLH), 212–215 (DIPG), 279–282 (NKID), and 308–310 (SGA). Positions 173 and 193 each coordinate Mg(2+). The disordered stretch occupies residues 332–356 (SIKAKSTSDSAATEEPWAAPLPPQG).

Belongs to the TRAFAC class OBG-HflX-like GTPase superfamily. OBG GTPase family. In terms of assembly, monomer. Mg(2+) serves as cofactor.

It localises to the cytoplasm. In terms of biological role, an essential GTPase which binds GTP, GDP and possibly (p)ppGpp with moderate affinity, with high nucleotide exchange rates and a fairly low GTP hydrolysis rate. Plays a role in control of the cell cycle, stress response, ribosome biogenesis and in those bacteria that undergo differentiation, in morphogenesis control. The protein is GTPase Obg of Bradyrhizobium sp. (strain BTAi1 / ATCC BAA-1182).